Consider the following 495-residue polypeptide: Alkaline protease 2 (495 aa).

The first 16 residues, 1-16 (MKGYLSLSILPLLVAA), serve as a signal peptide directing secretion. A propeptide spanning residues 17 to 136 (SPVVVDSIHN…IEKDSEVHTM (120 aa)) is cleaved from the precursor. One can recognise an Inhibitor I9 domain in the interval 43 to 136 (SYIVVFKKHV…IEKDSEVHTM (94 aa)). In terms of domain architecture, Peptidase S8 spans 146-452 (PWGLARISHR…GGSSNYTDII (307 aa)). Residues Asp-182 and His-214 each act as charge relay system in the active site. N-linked (GlcNAc...) asparagine glycosylation is present at Asn-284. The active-site Charge relay system is Ser-380. N-linked (GlcNAc...) asparagine glycosylation is found at Asn-447 and Asn-460.

Belongs to the peptidase S8 family.

The catalysed reaction is Hydrolysis of proteins with broad specificity, and of Bz-Arg-OEt &gt; Ac-Tyr-OEt. Does not hydrolyze peptide amides.. Functionally, alkaline protease that allows assimilation of proteinaceous substrates. Acts as a significant virulence factor in invasive aspergillosis. Required for regular sporulation. In Aspergillus fumigatus (strain CBS 144.89 / FGSC A1163 / CEA10) (Neosartorya fumigata), this protein is Alkaline protease 2 (alp2).